The primary structure comprises 204 residues: TPR repeat-containing protein RHE_CH03534.1 (204 aa).

The first 29 residues, 1 to 29 (MSAMRLFALTSAMLPLAFILSTSPFPATA), serve as a signal peptide directing secretion. TPR repeat units follow at residues 84-117 (INLLMQWADKAIEEKRNPAALDFLDEAIALKPDY), 118-151 (AESWNRRATLNFVMGNYRKSMSDIEHVLNIEPRH), and 153-185 (GALSGMAAILSNSGNDQLTLKAWERFLDIYPAD).

The polypeptide is TPR repeat-containing protein RHE_CH03534.1 (Rhizobium etli (strain ATCC 51251 / DSM 11541 / JCM 21823 / NBRC 15573 / CFN 42)).